The primary structure comprises 254 residues: DNA repair protein RecO (254 aa).

This sequence belongs to the RecO family.

In terms of biological role, involved in DNA repair and RecF pathway recombination. The sequence is that of DNA repair protein RecO from Agrobacterium fabrum (strain C58 / ATCC 33970) (Agrobacterium tumefaciens (strain C58)).